Reading from the N-terminus, the 775-residue chain is Dipeptidyl peptidase 4 (775 aa).

A signal peptide spans 1-15 (MKFLSLLLLAGIAQA). 4 N-linked (GlcNAc...) asparagine glycosylation sites follow: asparagine 81, asparagine 111, asparagine 170, and asparagine 219. Residues serine 613, aspartate 690, and histidine 725 each act as charge relay system in the active site.

This sequence belongs to the peptidase S9B family.

It is found in the secreted. It carries out the reaction Release of an N-terminal dipeptide, Xaa-Yaa-|-Zaa-, from a polypeptide, preferentially when Yaa is Pro, provided Zaa is neither Pro nor hydroxyproline.. Extracellular dipeptidyl-peptidase which removes N-terminal dipeptides sequentially from polypeptides having unsubstituted N-termini provided that the penultimate residue is proline. Contributes to pathogenicity. This is Dipeptidyl peptidase 4 (DPP4) from Trichophyton equinum (Horse ringworm fungus).